A 187-amino-acid polypeptide reads, in one-letter code: Ribosome maturation factor RimM (187 aa).

The PRC barrel domain maps to 91–183 (DDGFYDHELE…ILVLTPPEGL (93 aa)).

This sequence belongs to the RimM family. As to quaternary structure, binds ribosomal protein uS19.

It localises to the cytoplasm. Functionally, an accessory protein needed during the final step in the assembly of 30S ribosomal subunit, possibly for assembly of the head region. Essential for efficient processing of 16S rRNA. May be needed both before and after RbfA during the maturation of 16S rRNA. It has affinity for free ribosomal 30S subunits but not for 70S ribosomes. This is Ribosome maturation factor RimM from Corynebacterium jeikeium (strain K411).